Here is a 275-residue protein sequence, read N- to C-terminus: Phosphite import ATP-binding protein PxtA (275 aa).

Residues 11-252 (LRVDRLSVVY…QLERIYAGRS (242 aa)) enclose the ABC transporter domain. 44–51 (GLSGAGKS) contributes to the ATP binding site. Positions 251 to 275 (RSTTQPANAPAEPPVMLEPSLEMSR) are disordered.

This sequence belongs to the ABC transporter superfamily. Phosphonates importer (TC 3.A.1.9.1) family. As to quaternary structure, the complex is composed of two ATP-binding proteins (PtxA), two transmembrane proteins (PtxC) and a solute-binding protein (PtxB).

It localises to the cell inner membrane. It catalyses the reaction phosphite(out) + ATP + H2O = phosphite(in) + ADP + phosphate + H(+). Its function is as follows. Part of the ABC transporter complex PtxABC involved in phosphite import. Responsible for energy coupling to the transport system. This Stutzerimonas stutzeri (Pseudomonas stutzeri) protein is Phosphite import ATP-binding protein PxtA (ptxA).